The sequence spans 114 residues: Cytochrome c oxidase subunit 7A2-like, mitochondrial (114 aa).

A mitochondrion-targeting transit peptide spans 1–55; it reads MYYKFSGFTQKLAGAWASEAYSPQGLKPVVSTEAPPIIFATPTKLTSDSTVYDYA. K69 is modified (N6-acetyllysine). The helical transmembrane segment at 82 to 107 threads the bilayer; sequence PDQMLYRTTMALTVGGTIYCLIALYM.

It belongs to the cytochrome c oxidase VIIa family. As to quaternary structure, interacts with the mitochondrial respiratory complexes III (CIII) and IV (CIV), promoting their association.

It is found in the mitochondrion inner membrane. Functionally, assembly factor that mediates the formation of some mitochondrial respiratory supercomplexes (respirasomes), thereby promoting oxidative phosphorylation and energy metabolism. Acts as a molecular adapter that associates with both mitochondrial respiratory complexes III (CIII) and IV (CIV), promoting their association. Mediates the formation of various mitochondrial respiratory supercomplexes, such as MCIII(2)IV(2), composed of two CIII and two CIV, and the CS-respirasome (MCI(1)III(2)IV(2)), composed of one CI, two CIII and two CIV. Not involved in the formation of the canonical respirasome (MCI(1)III(2)IV(1)), composed of one CI, two CIII and one CIV. The formation of different respirasomes is important for cell adaptation to oxygen conditions and prevent metabolic exhaustion: supercomplexes mediated by COX7A2L/SCAF1 are required to maintain oxidative phosphorylation upon low oxygen conditions and promote metabolic rewiring toward glycolysis. In Homo sapiens (Human), this protein is Cytochrome c oxidase subunit 7A2-like, mitochondrial.